A 321-amino-acid chain; its full sequence is Lipoyl synthase (321 aa).

Residues Cys-68, Cys-73, Cys-79, Cys-94, Cys-98, Cys-101, and Ser-308 each coordinate [4Fe-4S] cluster. The region spanning 80–297 is the Radical SAM core domain; sequence FNHGTATFMI…KEIALELGFT (218 aa).

This sequence belongs to the radical SAM superfamily. Lipoyl synthase family. The cofactor is [4Fe-4S] cluster.

It is found in the cytoplasm. The catalysed reaction is [[Fe-S] cluster scaffold protein carrying a second [4Fe-4S](2+) cluster] + N(6)-octanoyl-L-lysyl-[protein] + 2 oxidized [2Fe-2S]-[ferredoxin] + 2 S-adenosyl-L-methionine + 4 H(+) = [[Fe-S] cluster scaffold protein] + N(6)-[(R)-dihydrolipoyl]-L-lysyl-[protein] + 4 Fe(3+) + 2 hydrogen sulfide + 2 5'-deoxyadenosine + 2 L-methionine + 2 reduced [2Fe-2S]-[ferredoxin]. It functions in the pathway protein modification; protein lipoylation via endogenous pathway; protein N(6)-(lipoyl)lysine from octanoyl-[acyl-carrier-protein]: step 2/2. In terms of biological role, catalyzes the radical-mediated insertion of two sulfur atoms into the C-6 and C-8 positions of the octanoyl moiety bound to the lipoyl domains of lipoate-dependent enzymes, thereby converting the octanoylated domains into lipoylated derivatives. In Vibrio cholerae serotype O1 (strain ATCC 39541 / Classical Ogawa 395 / O395), this protein is Lipoyl synthase.